A 295-amino-acid polypeptide reads, in one-letter code: Sulfotransferase 1E1 (295 aa).

48 to 53 (KSGTTW) provides a ligand contact to 3'-phosphoadenylyl sulfate. 106 to 108 (KTH) serves as a coordination point for substrate. Histidine 108 functions as the Proton acceptor in the catalytic mechanism. Arginine 130 and serine 138 together coordinate 3'-phosphoadenylyl sulfate. Position 156 is a phosphoserine (serine 156). 3'-phosphoadenylyl sulfate-binding positions include tyrosine 193, 227–232 (TSFQEM), and 257–259 (RKG).

The protein belongs to the sulfotransferase 1 family. As to quaternary structure, homodimer. As to expression, testis and at very low level in the placenta.

The protein localises to the cytoplasm. It localises to the cytosol. The catalysed reaction is estrone + 3'-phosphoadenylyl sulfate = estrone 3-sulfate + adenosine 3',5'-bisphosphate + H(+). It catalyses the reaction 17beta-estradiol + 3'-phosphoadenylyl sulfate = 17beta-estradiol 3-sulfate + adenosine 3',5'-bisphosphate + H(+). It carries out the reaction (24S)-hydroxycholesterol + 3'-phosphoadenylyl sulfate = (24S)-hydroxycholesterol 3-sulfate + adenosine 3',5'-bisphosphate + H(+). The enzyme catalyses 3beta-hydroxyandrost-5-en-17-one + 3'-phosphoadenylyl sulfate = dehydroepiandrosterone 3-sulfate + adenosine 3',5'-bisphosphate + H(+). The catalysed reaction is 4-ethylphenol + 3'-phosphoadenylyl sulfate = 4-ethylphenyl sulfate + adenosine 3',5'-bisphosphate + H(+). Its activity is regulated as follows. Inhibited by estradiol. Sulfotransferase that utilizes 3'-phospho-5'-adenylyl sulfate (PAPS) as sulfonate donor to catalyze the sulfate conjugation of estradiol and estrone. Is a key enzyme in estrogen homeostasis, the sulfation of estrogens leads to their inactivation. Also sulfates dehydroepiandrosterone, pregnenolone, (24S)-hydroxycholesterol and xenobiotic compounds like ethinylestradiol, equalenin, diethyl stilbesterol and 1-naphthol at significantly lower efficiency. Does not sulfonate cortisol, testosterone and dopamine. May play a role in gut microbiota-host metabolic interaction. O-sulfonates 4-ethylphenol (4-EP), a dietary tyrosine-derived metabolite produced by gut bacteria. The product 4-EPS crosses the blood-brain barrier and may negatively regulate oligodendrocyte maturation and myelination, affecting the functional connectivity of different brain regions associated with the limbic system. The polypeptide is Sulfotransferase 1E1 (Sult1e1) (Mus musculus (Mouse)).